The following is a 480-amino-acid chain: Glutathione reductase (480 aa).

FAD contacts are provided by Ser31 and Gly32. Ser31 contributes to the glutathione binding site. A glutathione-binding site is contributed by Arg38. Residues Glu51, Thr58, Cys59, and Lys67 each contribute to the FAD site. A disulfide bond links Cys59 and Cys64. Tyr121 contributes to the glutathione binding site. Residue Ala137 coordinates FAD. The NADP(+) site is built by Ile206, Glu209, Arg226, and Gly291. Asp331 contacts FAD. NADP(+) is bound at residue Glu337. Thr339 serves as a coordination point for FAD. Arg347 is a binding site for glutathione. Val372 contributes to the NADP(+) binding site. Glutathione is bound at residue Lys422. His469 serves as a coordination point for FAD. The active-site Proton acceptor is His469.

It belongs to the class-I pyridine nucleotide-disulfide oxidoreductase family. Homodimer. It depends on FAD as a cofactor.

It localises to the cytoplasm. Its subcellular location is the mitochondrion. It catalyses the reaction 2 glutathione + NADP(+) = glutathione disulfide + NADPH + H(+). Functionally, catalyzes the reduction of glutathione disulfide (GSSG) to reduced glutathione (GSH). Constitutes the major mechanism to maintain a high GSH:GSSG ratio in the cytosol. In Eremothecium gossypii (strain ATCC 10895 / CBS 109.51 / FGSC 9923 / NRRL Y-1056) (Yeast), this protein is Glutathione reductase (GLR1).